A 99-amino-acid polypeptide reads, in one-letter code: Large ribosomal subunit protein uL23 (99 aa).

The protein belongs to the universal ribosomal protein uL23 family. As to quaternary structure, part of the 50S ribosomal subunit. Contacts protein L29, and trigger factor when it is bound to the ribosome.

One of the early assembly proteins it binds 23S rRNA. One of the proteins that surrounds the polypeptide exit tunnel on the outside of the ribosome. Forms the main docking site for trigger factor binding to the ribosome. This Pseudomonas aeruginosa (strain LESB58) protein is Large ribosomal subunit protein uL23.